A 909-amino-acid chain; its full sequence is Phosphoenolpyruvate carboxylase (909 aa).

Catalysis depends on residues His-138 and Lys-572.

The protein belongs to the PEPCase type 1 family. The cofactor is Mg(2+).

It catalyses the reaction oxaloacetate + phosphate = phosphoenolpyruvate + hydrogencarbonate. Its function is as follows. Forms oxaloacetate, a four-carbon dicarboxylic acid source for the tricarboxylic acid cycle. The polypeptide is Phosphoenolpyruvate carboxylase (Lactobacillus delbrueckii subsp. bulgaricus (strain ATCC 11842 / DSM 20081 / BCRC 10696 / JCM 1002 / NBRC 13953 / NCIMB 11778 / NCTC 12712 / WDCM 00102 / Lb 14)).